The following is a 927-amino-acid chain: Translation initiation factor IF-2 (927 aa).

Residues 27–337 (LGLPVKSHAS…GAPKPVTERK (311 aa)) form a disordered region. Residues 49 to 69 (SFSSSKTKAPTNSVQTNQGVK) are compositionally biased toward polar residues. Basic and acidic residues-rich tracts occupy residues 70–86 (TESK…DDKP) and 101–138 (FKAE…DRRH). Residues 146–159 (GNRNDNRQGQQNNR) show a composition bias toward low complexity. 3 stretches are compositionally biased toward basic and acidic residues: residues 160 to 171 (NKNDGRYADHKQ), 202 to 226 (YSRH…EQEL), and 234 to 257 (AQEE…KEIV). The span at 300–316 (NWNNQNQVRNQRNSNWN) shows a compositional bias: low complexity. In terms of domain architecture, tr-type G spans 428-597 (ERPPVVTIMG…LLVAEMEELK (170 aa)). The segment at 437–444 (GHVDHGKT) is G1. A GTP-binding site is contributed by 437 to 444 (GHVDHGKT). Residues 462–466 (GITQH) form a G2 region. The interval 483 to 486 (DTPG) is G3. Residues 483-487 (DTPGH) and 537-540 (NKID) contribute to the GTP site. The segment at 537–540 (NKID) is G4. The interval 573-575 (SAK) is G5.

It belongs to the TRAFAC class translation factor GTPase superfamily. Classic translation factor GTPase family. IF-2 subfamily.

The protein localises to the cytoplasm. One of the essential components for the initiation of protein synthesis. Protects formylmethionyl-tRNA from spontaneous hydrolysis and promotes its binding to the 30S ribosomal subunits. Also involved in the hydrolysis of GTP during the formation of the 70S ribosomal complex. The sequence is that of Translation initiation factor IF-2 from Streptococcus agalactiae serotype V (strain ATCC BAA-611 / 2603 V/R).